The chain runs to 400 residues: Phosphoglycerate kinase (400 aa).

Residues 22 to 24, R38, 61 to 64, R119, and R152 each bind substrate; these read DFN and HLGR. Residues K205, G296, E327, and 353–356 contribute to the ATP site; that span reads GGDT.

This sequence belongs to the phosphoglycerate kinase family. As to quaternary structure, monomer.

The protein resides in the cytoplasm. It catalyses the reaction (2R)-3-phosphoglycerate + ATP = (2R)-3-phospho-glyceroyl phosphate + ADP. The protein operates within carbohydrate degradation; glycolysis; pyruvate from D-glyceraldehyde 3-phosphate: step 2/5. This is Phosphoglycerate kinase from Campylobacter jejuni subsp. jejuni serotype O:2 (strain ATCC 700819 / NCTC 11168).